The following is a 345-amino-acid chain: Phosphoribosylformylglycinamidine cyclo-ligase (345 aa).

The protein belongs to the AIR synthase family.

Its subcellular location is the cytoplasm. It carries out the reaction 2-formamido-N(1)-(5-O-phospho-beta-D-ribosyl)acetamidine + ATP = 5-amino-1-(5-phospho-beta-D-ribosyl)imidazole + ADP + phosphate + H(+). Its pathway is purine metabolism; IMP biosynthesis via de novo pathway; 5-amino-1-(5-phospho-D-ribosyl)imidazole from N(2)-formyl-N(1)-(5-phospho-D-ribosyl)glycinamide: step 2/2. The chain is Phosphoribosylformylglycinamidine cyclo-ligase from Shewanella sp. (strain MR-7).